A 299-amino-acid chain; its full sequence is GTPase Era (299 aa).

The region spanning 5-172 (RSGFISIIGR…KDLIFAKLPE (168 aa)) is the Era-type G domain. Positions 13-20 (GRPNVGKS) are G1. Position 13–20 (13–20 (GRPNVGKS)) interacts with GTP. The segment at 39–43 (QTTRN) is G2. Residues 60–63 (DTPG) are G3. GTP is bound by residues 60-64 (DTPGI) and 122-125 (NKMD). A G4 region spans residues 122–125 (NKMD). The G5 stretch occupies residues 151-153 (VSA). The KH type-2 domain occupies 203 to 280 (TREEIPHSVA…YLELWVKVKK (78 aa)).

The protein belongs to the TRAFAC class TrmE-Era-EngA-EngB-Septin-like GTPase superfamily. Era GTPase family. In terms of assembly, monomer.

It is found in the cytoplasm. The protein localises to the cell membrane. An essential GTPase that binds both GDP and GTP, with rapid nucleotide exchange. Plays a role in 16S rRNA processing and 30S ribosomal subunit biogenesis and possibly also in cell cycle regulation and energy metabolism. The chain is GTPase Era from Heliobacterium modesticaldum (strain ATCC 51547 / Ice1).